We begin with the raw amino-acid sequence, 426 residues long: D-tagatose-1,6-bisphosphate aldolase subunit KbaZ (426 aa).

The protein belongs to the GatZ/KbaZ family. KbaZ subfamily. In terms of assembly, forms a complex with KbaY.

Its pathway is carbohydrate metabolism; D-tagatose 6-phosphate degradation; D-glyceraldehyde 3-phosphate and glycerone phosphate from D-tagatose 6-phosphate: step 2/2. Its function is as follows. Component of the tagatose-1,6-bisphosphate aldolase KbaYZ that is required for full activity and stability of the Y subunit. Could have a chaperone-like function for the proper and stable folding of KbaY. When expressed alone, KbaZ does not show any aldolase activity. The sequence is that of D-tagatose-1,6-bisphosphate aldolase subunit KbaZ from Escherichia coli O1:K1 / APEC.